We begin with the raw amino-acid sequence, 226 residues long: RLA class II histocompatibility antigen, DP alpha-1 chain (226 aa).

Residues 1–189 (EHVSVFVIFA…PIQMPETTET (189 aa)) lie on the Extracellular side of the membrane. N-linked (GlcNAc...) asparagine glycosylation is found at Asn-75 and Asn-115. One can recognise an Ig-like C1-type domain in the interval 84–176 (PEVIVFPKEP…LDAPLLTHWE (93 aa)). Cys-104 and Cys-160 are disulfide-bonded. A helical membrane pass occupies residues 190-210 (VVCALGLVVGLAGVVVGIVLI). Residues 211-226 (TKALRSSPDPRARRPL) are Cytoplasmic-facing.

Belongs to the MHC class II family.

It is found in the membrane. This chain is RLA class II histocompatibility antigen, DP alpha-1 chain, found in Oryctolagus cuniculus (Rabbit).